Consider the following 409-residue polypeptide: Argininosuccinate synthase (409 aa).

10–18 (AYSGGLDTS) contributes to the ATP binding site. L-citrulline is bound at residue Tyr-87. Gly-117 serves as a coordination point for ATP. 3 residues coordinate L-aspartate: Thr-119, Asn-123, and Asp-124. Asn-123 provides a ligand contact to L-citrulline. L-citrulline contacts are provided by Arg-127, Ser-175, Ser-184, Glu-260, and Tyr-272.

This sequence belongs to the argininosuccinate synthase family. Type 1 subfamily. Homotetramer.

The protein resides in the cytoplasm. The catalysed reaction is L-citrulline + L-aspartate + ATP = 2-(N(omega)-L-arginino)succinate + AMP + diphosphate + H(+). Its pathway is amino-acid biosynthesis; L-arginine biosynthesis; L-arginine from L-ornithine and carbamoyl phosphate: step 2/3. This is Argininosuccinate synthase from Rubrobacter xylanophilus (strain DSM 9941 / JCM 11954 / NBRC 16129 / PRD-1).